Reading from the N-terminus, the 446-residue chain is Glucose transporter GlcP (446 aa).

The Cytoplasmic segment spans residues 1-6; sequence MKANKY. Residues 7–31 traverse the membrane as a helical segment; that stretch reads LIFILGALGGLLYGYDNGVISGALL. At 32–38 the chain is on the extracellular side; the sequence is FIHKDIP. Residues 39–64 form a helical membrane-spanning segment; the sequence is LNSTTEGIVVSSMLIGAIVGAGSSGP. Residues 65-70 lie on the Cytoplasmic side of the membrane; that stretch reads LADKLG. A helical membrane pass occupies residues 71–90; it reads RRRLVMLIAIVFIIGALILA. Residues 91 to 94 lie on the Extracellular side of the membrane; that stretch reads ASTN. Residues 95–122 traverse the membrane as a helical segment; sequence LALLIIGRLIIGLAVGGSMSTVPVYLSE. The Cytoplasmic segment spans residues 123–129; that stretch reads MAPTEYR. Residues 130–152 traverse the membrane as a helical segment; that stretch reads GSLGSLNQLMITIGILAAYLVNY. Residues 153 to 154 lie on the Extracellular side of the membrane; it reads AF. A helical membrane pass occupies residues 155–180; that stretch reads ADIEGWRWMLGLAVVPSVILLVGIYF. Topologically, residues 181–234 are cytoplasmic; sequence MPESPRWLLENRNEEAARQVMKITYDDSEIDKELKEMKEINAISESTWTVIKSP. Residues 235-269 form a helical membrane-spanning segment; it reads WLGRILIVGCIFAIFQQFIGINAVIFYSSSIFAKA. Topologically, residues 270 to 272 are extracellular; that stretch reads GLG. The helical transmembrane segment at 273-295 threads the bilayer; it reads EAASILGSVGIGTINVLVTIVAI. Over 296–303 the chain is Cytoplasmic; the sequence is FVVDKIDR. A helical membrane pass occupies residues 304-324; that stretch reads KKLLVGGNIGMIASLLIMAIL. Residues 325 to 329 lie on the Extracellular side of the membrane; sequence IWTIG. A helical membrane pass occupies residues 330-363; the sequence is IASSAWIIIVCLSLFIVFFGISWGPVLWVMLPEL. Residues 364–370 are Cytoplasmic-facing; that stretch reads FPMRARG. The helical transmembrane segment at 371–399 threads the bilayer; the sequence is AATGISALVLNIGTLIVSLFFPILSDALS. Residues 400–401 lie on the Extracellular side of the membrane; the sequence is TE. The helical transmembrane segment at 402–420 threads the bilayer; that stretch reads WVFLIFAFIGVLAMIFVIK. The Cytoplasmic portion of the chain corresponds to 421 to 446; that stretch reads FLPETRGRSLEEIEYELRERTGARTE.

Belongs to the major facilitator superfamily. Sugar transporter (TC 2.A.1.1) family.

Its subcellular location is the cell membrane. With respect to regulation, inhibited by carbonyl cyanide m-chlorophenylhydrazone (CCCP) and by the human glucose transport inhibitors cytochalasin B, phloretin, and forskolin. Functionally, transporter highly specific for glucose uptake. The chain is Glucose transporter GlcP from Staphylococcus epidermidis (strain ATCC 12228 / FDA PCI 1200).